An 844-amino-acid chain; its full sequence is DNA mismatch repair protein MutS (844 aa).

An ATP-binding site is contributed by G610–S617.

Belongs to the DNA mismatch repair MutS family.

Its function is as follows. This protein is involved in the repair of mismatches in DNA. It is possible that it carries out the mismatch recognition step. This protein has a weak ATPase activity. The polypeptide is DNA mismatch repair protein MutS (Francisella tularensis subsp. novicida (strain U112)).